The following is a 230-amino-acid chain: ATP synthase subunit a 1 (230 aa).

Transmembrane regions (helical) follow at residues 20–40 (ATIV…WLIT), 78–98 (FLPF…LTIF), 112–132 (AALA…NVGI), 174–194 (LLVA…MTLF), and 195–215 (GLLV…VYIA).

Belongs to the ATPase A chain family. As to quaternary structure, F-type ATPases have 2 components, CF(1) - the catalytic core - and CF(0) - the membrane proton channel. CF(1) has five subunits: alpha(3), beta(3), gamma(1), delta(1), epsilon(1). CF(0) has four main subunits: a, b, b' and c.

The protein localises to the cellular thylakoid membrane. In terms of biological role, key component of the proton channel; it plays a direct role in the translocation of protons across the membrane. This chain is ATP synthase subunit a 1, found in Crocosphaera subtropica (strain ATCC 51142 / BH68) (Cyanothece sp. (strain ATCC 51142)).